We begin with the raw amino-acid sequence, 201 residues long: Adenylyl-sulfate kinase (201 aa).

35–42 (GLSGSGKS) contacts ATP. Ser-109 (phosphoserine intermediate) is an active-site residue.

The protein belongs to the APS kinase family.

It carries out the reaction adenosine 5'-phosphosulfate + ATP = 3'-phosphoadenylyl sulfate + ADP + H(+). It functions in the pathway sulfur metabolism; hydrogen sulfide biosynthesis; sulfite from sulfate: step 2/3. Catalyzes the synthesis of activated sulfate. This Shigella flexneri protein is Adenylyl-sulfate kinase.